The primary structure comprises 564 residues: NAD-dependent malic enzyme (564 aa).

The Proton donor role is filled by tyrosine 102. Arginine 155 serves as a coordination point for NAD(+). Catalysis depends on lysine 173, which acts as the Proton acceptor. Positions 244, 245, and 268 each coordinate a divalent metal cation. 2 residues coordinate NAD(+): aspartate 268 and asparagine 417.

Belongs to the malic enzymes family. As to quaternary structure, homotetramer. It depends on Mg(2+) as a cofactor. Mn(2+) is required as a cofactor.

The catalysed reaction is (S)-malate + NAD(+) = pyruvate + CO2 + NADH. The enzyme catalyses oxaloacetate + H(+) = pyruvate + CO2. The chain is NAD-dependent malic enzyme from Pseudomonas aeruginosa (strain UCBPP-PA14).